The primary structure comprises 178 residues: MSIAKRVQQWATFARTWHIYDCTWQNPFESAKLVKTHLLGLQKPIYHPMNDCGDHVVLINTREIALPGDEWVKRVYFHHTGYPGGASWTLAWQLHEKDPTMVMKKAVYNSMRGNLQRRHTMQRLHLFADDQVPEEILQNVTNQIRTPRSIPQRLDHIDKETLENFPNIMDYPKDYILR.

It belongs to the universal ribosomal protein uL13 family. As to quaternary structure, component of the mitochondrial ribosome large subunit (39S) which comprises a 16S rRNA and about 50 distinct proteins.

The protein resides in the mitochondrion. This chain is Large ribosomal subunit protein uL13m (mRpL13), found in Drosophila melanogaster (Fruit fly).